The chain runs to 467 residues: Pup--protein ligase (467 aa).

Glutamate 12 lines the Mg(2+) pocket. Arginine 56 is an ATP binding site. Tyrosine 58 is a binding site for Mg(2+). Aspartate 60 acts as the Proton acceptor in catalysis. Residue glutamate 66 participates in Mg(2+) binding. ATP is bound by residues threonine 69 and tryptophan 431.

This sequence belongs to the Pup ligase/Pup deamidase family. Pup-conjugating enzyme subfamily.

The enzyme catalyses ATP + [prokaryotic ubiquitin-like protein]-L-glutamate + [protein]-L-lysine = ADP + phosphate + N(6)-([prokaryotic ubiquitin-like protein]-gamma-L-glutamyl)-[protein]-L-lysine.. It functions in the pathway protein degradation; proteasomal Pup-dependent pathway. It participates in protein modification; protein pupylation. Catalyzes the covalent attachment of the prokaryotic ubiquitin-like protein modifier Pup to the proteasomal substrate proteins, thereby targeting them for proteasomal degradation. This tagging system is termed pupylation. The ligation reaction involves the side-chain carboxylate of the C-terminal glutamate of Pup and the side-chain amino group of a substrate lysine. In Corynebacterium jeikeium (strain K411), this protein is Pup--protein ligase.